A 305-amino-acid chain; its full sequence is Elongation factor Ts, mitochondrial (305 aa).

Belongs to the EF-Ts family.

Its subcellular location is the mitochondrion. Associates with the EF-Tu.GDP complex and induces the exchange of GDP to GTP. It remains bound to the aminoacyl-tRNA.EF-Tu.GTP complex up to the GTP hydrolysis stage on the ribosome. This chain is Elongation factor Ts, mitochondrial (tsfm), found in Danio rerio (Zebrafish).